Reading from the N-terminus, the 192-residue chain is uncharacterized protein (192 aa).

A disordered region spans residues 71–100 (NNVLPEPSKPNNPVVNPPVSPIQPKTDPEQ). A compositionally biased stretch (pro residues) spans 77–91 (PSKPNNPVVNPPVSP).

This is an uncharacterized protein from Caenorhabditis elegans.